Consider the following 295-residue polypeptide: Elongation factor Ts (295 aa).

The interval 79–82 (TDFV) is involved in Mg(2+) ion dislocation from EF-Tu.

This sequence belongs to the EF-Ts family.

The protein resides in the cytoplasm. Its function is as follows. Associates with the EF-Tu.GDP complex and induces the exchange of GDP to GTP. It remains bound to the aminoacyl-tRNA.EF-Tu.GTP complex up to the GTP hydrolysis stage on the ribosome. The polypeptide is Elongation factor Ts (Mycoplasma capricolum subsp. capricolum (strain California kid / ATCC 27343 / NCTC 10154)).